The sequence spans 348 residues: Histidinol-phosphate aminotransferase (348 aa).

Lys210 is modified (N6-(pyridoxal phosphate)lysine).

It belongs to the class-II pyridoxal-phosphate-dependent aminotransferase family. Histidinol-phosphate aminotransferase subfamily. In terms of assembly, homodimer. Requires pyridoxal 5'-phosphate as cofactor.

The catalysed reaction is L-histidinol phosphate + 2-oxoglutarate = 3-(imidazol-4-yl)-2-oxopropyl phosphate + L-glutamate. Its pathway is amino-acid biosynthesis; L-histidine biosynthesis; L-histidine from 5-phospho-alpha-D-ribose 1-diphosphate: step 7/9. The polypeptide is Histidinol-phosphate aminotransferase (Pseudomonas putida (strain ATCC 47054 / DSM 6125 / CFBP 8728 / NCIMB 11950 / KT2440)).